Here is a 146-residue protein sequence, read N- to C-terminus: MVNSCCGSVCSDQGCDQGLCQETCCRPSCCQTTCCCPSCVVSSCCRPSCSQTTCCQTTCCRPSCCHPVCCQTTCRPSCGVSSCCRPLCCQTTCHPSCGMSSCCRPLCCQTTCRPSCGVSSCCRPLCCQTTCCRATCCRPSCCGSSC.

A run of 18 repeats spans residues 5 to 9, 24 to 28, 29 to 33, 34 to 38, 44 to 48, 54 to 58, 59 to 63, 64 to 68, 69 to 73, 83 to 87, 88 to 92, 102 to 106, 107 to 111, 121 to 125, 126 to 130, 131 to 135, 136 to 140, and 141 to 145. The 18 X 5 AA repeats of C-C-[GRQC]-[SPT]-[VSTL] stretch occupies residues 5–145; the sequence is CCGSVCSDQG…CCRPSCCGSS (141 aa).

The protein belongs to the KRTAP type 4 family. Interacts with hair keratins. In terms of tissue distribution, expressed in the hair follicles.

In terms of biological role, in the hair cortex, hair keratin intermediate filaments are embedded in an interfilamentous matrix, consisting of hair keratin-associated proteins (KRTAP), which are essential for the formation of a rigid and resistant hair shaft through their extensive disulfide bond cross-linking with abundant cysteine residues of hair keratins. The matrix proteins include the high-sulfur and high-glycine-tyrosine keratins. In Homo sapiens (Human), this protein is Keratin-associated protein 4-1 (KRTAP4-1).